The chain runs to 118 residues: Large ribosomal subunit protein uL18 (118 aa).

The protein belongs to the universal ribosomal protein uL18 family. Part of the 50S ribosomal subunit; part of the 5S rRNA/L5/L18/L25 subcomplex. Contacts the 5S and 23S rRNAs.

In terms of biological role, this is one of the proteins that bind and probably mediate the attachment of the 5S RNA into the large ribosomal subunit, where it forms part of the central protuberance. The protein is Large ribosomal subunit protein uL18 of Ligilactobacillus salivarius (strain UCC118) (Lactobacillus salivarius).